A 428-amino-acid polypeptide reads, in one-letter code: Dihydroorotase (428 aa).

2 residues coordinate Zn(2+): histidine 59 and histidine 61. Substrate is bound by residues 61 to 63 (HLR) and asparagine 93. Zn(2+) is bound by residues aspartate 151, histidine 178, and histidine 231. Asparagine 277 contributes to the substrate binding site. Aspartate 304 is a Zn(2+) binding site. Aspartate 304 is a catalytic residue. Substrate is bound by residues histidine 308 and 322–323 (FG).

This sequence belongs to the metallo-dependent hydrolases superfamily. DHOase family. Class I DHOase subfamily. It depends on Zn(2+) as a cofactor.

It catalyses the reaction (S)-dihydroorotate + H2O = N-carbamoyl-L-aspartate + H(+). It participates in pyrimidine metabolism; UMP biosynthesis via de novo pathway; (S)-dihydroorotate from bicarbonate: step 3/3. In terms of biological role, catalyzes the reversible cyclization of carbamoyl aspartate to dihydroorotate. This is Dihydroorotase from Bacillus cereus (strain ATCC 10987 / NRS 248).